The following is a 115-amino-acid chain: Large ribosomal subunit protein uL24 (115 aa).

This sequence belongs to the universal ribosomal protein uL24 family. In terms of assembly, part of the 50S ribosomal subunit.

In terms of biological role, one of two assembly initiator proteins, it binds directly to the 5'-end of the 23S rRNA, where it nucleates assembly of the 50S subunit. One of the proteins that surrounds the polypeptide exit tunnel on the outside of the subunit. The polypeptide is Large ribosomal subunit protein uL24 (Acaryochloris marina (strain MBIC 11017)).